Consider the following 826-residue polypeptide: DEAD-box ATP-dependent RNA helicase 13 (826 aa).

Residues 1–10 show a composition bias toward basic and acidic residues; sequence MVTGDKESSL. Disordered stretches follow at residues 1-62 and 76-175; these read MVTG…QLDG and HLTL…GDDT. The span at 11–22 shows a compositional bias: basic residues; sequence MKKRNKRSHKRK. Residues 49–58 are compositionally biased toward polar residues; the sequence is SFSTLFSGSG. The span at 94–128 shows a compositional bias: acidic residues; that stretch reads EDDDDTNETVDEMIEGEEAEEDGEGRDDEDDEDDE. Residues 125–166 adopt a coiled-coil conformation; it reads EDDEETRKKKEKKAKRNKEKKKEKKKKKQKKINEAAKNQDAS. A compositionally biased stretch (basic residues) spans 133–154; it reads KKEKKAKRNKEKKKEKKKKKQK. The short motif at 190 to 218 is the Q motif element; it reads SAWSSMRLHPLLMKSIYRLDFKEPTKIQK. The Helicase ATP-binding domain maps to 222-439; sequence NVAAYQGKDV…KLKRGSSKSK (218 aa). 235–242 contributes to the ATP binding site; that stretch reads AETGSGKT. Residues 363–366 carry the DEAD box motif; the sequence is DEAD. The 169-residue stretch at 476–644 folds into the Helicase C-terminal domain; the sequence is KIEESFIKCE…YMPAVRKRLY (169 aa). 2 coiled-coil regions span residues 666 to 712 and 783 to 810; these read LKKH…TLLS and KMKG…IGRR. Residues 783-826 are disordered; it reads KMKGQSAEKRRDIASLKKKRKEEKIGRRDQRRNQKKQRKLMASS. 2 stretches are compositionally biased toward basic and acidic residues: residues 788 to 797 and 804 to 814; these read SAEKRRDIAS and EEKIGRRDQRR. A compositionally biased stretch (basic residues) spans 815–826; that stretch reads NQKKQRKLMASS.

The protein belongs to the DEAD box helicase family. DDX24/MAK5 subfamily.

It carries out the reaction ATP + H2O = ADP + phosphate + H(+). The chain is DEAD-box ATP-dependent RNA helicase 13 (RH13) from Arabidopsis thaliana (Mouse-ear cress).